Consider the following 213-residue polypeptide: ATP-dependent dethiobiotin synthetase BioD 2 (213 aa).

13 to 18 is a binding site for ATP; sequence DIGKTI. Threonine 17 is a binding site for Mg(2+). Lysine 38 is a catalytic residue. Position 42 (threonine 42) interacts with substrate. ATP contacts are provided by residues aspartate 50 and 115–118; that span reads EGAG. Aspartate 50 and glutamate 115 together coordinate Mg(2+).

Belongs to the dethiobiotin synthetase family. In terms of assembly, homodimer. Mg(2+) serves as cofactor.

The protein resides in the cytoplasm. The catalysed reaction is (7R,8S)-7,8-diammoniononanoate + CO2 + ATP = (4R,5S)-dethiobiotin + ADP + phosphate + 3 H(+). Its pathway is cofactor biosynthesis; biotin biosynthesis; biotin from 7,8-diaminononanoate: step 1/2. Functionally, catalyzes a mechanistically unusual reaction, the ATP-dependent insertion of CO2 between the N7 and N8 nitrogen atoms of 7,8-diaminopelargonic acid (DAPA, also called 7,8-diammoniononanoate) to form a ureido ring. The protein is ATP-dependent dethiobiotin synthetase BioD 2 of Pasteurella multocida (strain Pm70).